The following is a 125-amino-acid chain: Large ribosomal subunit protein bL12 (125 aa).

The protein belongs to the bacterial ribosomal protein bL12 family. As to quaternary structure, homodimer. Part of the ribosomal stalk of the 50S ribosomal subunit. Forms a multimeric L10(L12)X complex, where L10 forms an elongated spine to which 2 to 4 L12 dimers bind in a sequential fashion. Binds GTP-bound translation factors.

Its function is as follows. Forms part of the ribosomal stalk which helps the ribosome interact with GTP-bound translation factors. Is thus essential for accurate translation. The protein is Large ribosomal subunit protein bL12 of Mannheimia succiniciproducens (strain KCTC 0769BP / MBEL55E).